Consider the following 334-residue polypeptide: Trans-3-hydroxy-L-proline dehydratase (334 aa).

The Proton acceptor role is filled by Cys-91. Residues 92–93 (GH), Asp-250, and 255–256 (GT) contribute to the substrate site.

The protein belongs to the proline racemase family.

It catalyses the reaction trans-3-hydroxy-L-proline = 1-pyrroline-2-carboxylate + H2O. Catalyzes the dehydration of trans-3-hydroxy-L-proline (t3LHyp) to Delta(1)-pyrroline-2-carboxylate (Pyr2C). Is likely involved in a degradation pathway that converts t3LHyp to L-proline, which allows B.cereus to grow on t3LHyp as a sole carbon source. Displays no proline racemase activity. This chain is Trans-3-hydroxy-L-proline dehydratase, found in Bacillus cereus (strain ATCC 14579 / DSM 31 / CCUG 7414 / JCM 2152 / NBRC 15305 / NCIMB 9373 / NCTC 2599 / NRRL B-3711).